The chain runs to 153 residues: Arginine repressor (153 aa).

This sequence belongs to the ArgR family.

The protein localises to the cytoplasm. It participates in amino-acid biosynthesis; L-arginine biosynthesis [regulation]. Functionally, regulates arginine biosynthesis genes. The protein is Arginine repressor of Haemophilus ducreyi (strain 35000HP / ATCC 700724).